Here is a 79-residue protein sequence, read N- to C-terminus: Conotoxin 12 (79 aa).

An N-terminal signal peptide occupies residues 1–22; the sequence is MKLTCVLIITVLFLTASQLITA. Positions 23–47 are excised as a propeptide; sequence DYSRDQRQYRAVRLGDEMRNFKGAR. 3 cysteine pairs are disulfide-bonded: Cys-49–Cys-62, Cys-56–Cys-67, and Cys-61–Cys-77.

This sequence belongs to the conotoxin O1 superfamily. In terms of tissue distribution, expressed by the venom duct.

It localises to the secreted. This chain is Conotoxin 12, found in Conus vexillum (Flag cone).